The primary structure comprises 588 residues: Aspartate--tRNA ligase (588 aa).

Glu177 lines the L-aspartate pocket. The aspartate stretch occupies residues 201 to 204; the sequence is QIFK. Arg223 contributes to the L-aspartate binding site. ATP is bound by residues 223–225 and Gln232; that span reads RDE. Position 451 (His451) interacts with L-aspartate. Glu485 serves as a coordination point for ATP. Residue Arg492 participates in L-aspartate binding. 537–540 contributes to the ATP binding site; it reads GLDR.

Belongs to the class-II aminoacyl-tRNA synthetase family. Type 1 subfamily. In terms of assembly, homodimer.

It localises to the cytoplasm. It catalyses the reaction tRNA(Asp) + L-aspartate + ATP = L-aspartyl-tRNA(Asp) + AMP + diphosphate. Catalyzes the attachment of L-aspartate to tRNA(Asp) in a two-step reaction: L-aspartate is first activated by ATP to form Asp-AMP and then transferred to the acceptor end of tRNA(Asp). The protein is Aspartate--tRNA ligase of Staphylococcus saprophyticus subsp. saprophyticus (strain ATCC 15305 / DSM 20229 / NCIMB 8711 / NCTC 7292 / S-41).